The sequence spans 305 residues: Ribosomal RNA small subunit methyltransferase H (305 aa).

S-adenosyl-L-methionine is bound by residues 37–39, aspartate 57, phenylalanine 85, aspartate 101, and histidine 108; that span reads GGH.

This sequence belongs to the methyltransferase superfamily. RsmH family.

It is found in the cytoplasm. It carries out the reaction cytidine(1402) in 16S rRNA + S-adenosyl-L-methionine = N(4)-methylcytidine(1402) in 16S rRNA + S-adenosyl-L-homocysteine + H(+). In terms of biological role, specifically methylates the N4 position of cytidine in position 1402 (C1402) of 16S rRNA. The sequence is that of Ribosomal RNA small subunit methyltransferase H from Parabacteroides distasonis (strain ATCC 8503 / DSM 20701 / CIP 104284 / JCM 5825 / NCTC 11152).